A 371-amino-acid chain; its full sequence is Phosphate acyltransferase (371 aa).

It belongs to the PlsX family. As to quaternary structure, homodimer. Probably interacts with PlsY.

The protein resides in the cytoplasm. It carries out the reaction a fatty acyl-[ACP] + phosphate = an acyl phosphate + holo-[ACP]. Its pathway is lipid metabolism; phospholipid metabolism. Catalyzes the reversible formation of acyl-phosphate (acyl-PO(4)) from acyl-[acyl-carrier-protein] (acyl-ACP). This enzyme utilizes acyl-ACP as fatty acyl donor, but not acyl-CoA. The polypeptide is Phosphate acyltransferase (Polaromonas sp. (strain JS666 / ATCC BAA-500)).